A 38-amino-acid chain; its full sequence is Large ribosomal subunit protein bL36 (38 aa).

The protein belongs to the bacterial ribosomal protein bL36 family.

This is Large ribosomal subunit protein bL36 from Hamiltonella defensa subsp. Acyrthosiphon pisum (strain 5AT).